A 582-amino-acid chain; its full sequence is MAPRKTVGILGGGQLGRMLTHPAALLGIPLLILDSGSYTPAKQTLLPPPPHSHPDGPFTSETHIRKLASACDILTVEIEHVNADVLEAVEKEGLCEVQPSPKTIRLIQNKYDQKKYLAERGVAVAPFEELPANPTEEDFKAIAGRLGLPLMLKAKTLAYDGRGNSPLKSASSEDIQASLKFLGDRPLYAEGWAPFVKEVAVMVVRNKEGEVQSYDAVETIHRESILRVCLTPLRGEKGVNQRARELAEKAVGHLEGAGIFGVEMFLMPDGELLLNEIAPRPHNSGHHTIEACLTSQFENHLRAILSLPLGSTALRVPSAAMVNILGASSTMDAIDKMADNALTVPGAAVHLYGKAESRKARKMGHITVTAESDAELNERLRALLFAQPDAHADWIDLIAPPSPAPAHSHAKPLVGIIMGSDSDLPVMHPATKILEKFGVPYELTITSAHRTPERMVKYAKTAADRGLRAIIAGAGGAAHLPGMVASETSLPVIGVPVKASVLDGVDSLYSIVQMPRGIPCATVGINNSTNAALLAVRILGTSVPALNKATEEYSKALEEEVLAKVDILEEEGWDKYIERLKK.

An ATP-grasp domain is found at 114–305; sequence KKYLAERGVA…QFENHLRAIL (192 aa). Residue 143–200 coordinates ATP; the sequence is AGRLGLPLMLKAKTLAYDGRGNSPLKSASSEDIQASLKFLGDRPLYAEGWAPFVKEVA.

In the C-terminal section; belongs to the AIR carboxylase family. Class I subfamily.

It carries out the reaction 5-amino-1-(5-phospho-D-ribosyl)imidazole-4-carboxylate + H(+) = 5-amino-1-(5-phospho-beta-D-ribosyl)imidazole + CO2. It functions in the pathway purine metabolism; IMP biosynthesis via de novo pathway; 5-amino-1-(5-phospho-D-ribosyl)imidazole-4-carboxylate from 5-amino-1-(5-phospho-D-ribosyl)imidazole (carboxylase route): step 1/1. This chain is Phosphoribosylaminoimidazole carboxylase (ADE2), found in Cryptococcus neoformans var. neoformans serotype D (strain B-3501A) (Filobasidiella neoformans).